The chain runs to 151 residues: MTTLRLDSLKANVGARRRKMRKGRGIAAGQGASCGFGMRGQKSRSGRPTRPGFEGGQMPLYRRVPKLKHFTTVNSKEFTVVNVAALNELKAGSTINLDTLVKNGVVTSPKYPLKVLGNGELKVKLTIQAAAFTATARSKIEAAGGTCEILD.

The segment at 37-57 (GMRGQKSRSGRPTRPGFEGGQ) is disordered.

Belongs to the universal ribosomal protein uL15 family. In terms of assembly, part of the 50S ribosomal subunit.

Its function is as follows. Binds to the 23S rRNA. The polypeptide is Large ribosomal subunit protein uL15 (Prochlorococcus marinus (strain MIT 9313)).